A 292-amino-acid polypeptide reads, in one-letter code: UPF0696 protein C11orf68 (292 aa).

Residues 1–11 show a composition bias toward low complexity; it reads MAAAAAAAVAG. Positions 1 to 60 are disordered; it reads MAAAAAAAVAGVGRGGGGAEPRQERSRARGWAGVERSEGRRMEPGEELEEEGSPGGREDG. Position 29 is an omega-N-methylarginine (Arg-29). The segment covering 35-44 has biased composition (basic and acidic residues); it reads ERSEGRRMEP.

The protein belongs to the UPF0696 family.

This chain is UPF0696 protein C11orf68 (C11orf68), found in Homo sapiens (Human).